The primary structure comprises 208 residues: Large ribosomal subunit protein uL4 (208 aa).

The segment at 45–89 (RQGTHAHKNRSAVSGGGKKPWRQKGTGRARQGSTRSPQWRGGGTV) is disordered.

The protein belongs to the universal ribosomal protein uL4 family. In terms of assembly, part of the 50S ribosomal subunit.

In terms of biological role, one of the primary rRNA binding proteins, this protein initially binds near the 5'-end of the 23S rRNA. It is important during the early stages of 50S assembly. It makes multiple contacts with different domains of the 23S rRNA in the assembled 50S subunit and ribosome. Its function is as follows. Forms part of the polypeptide exit tunnel. The chain is Large ribosomal subunit protein uL4 from Lactococcus lactis subsp. lactis (strain IL1403) (Streptococcus lactis).